We begin with the raw amino-acid sequence, 601 residues long: NADH-quinone oxidoreductase subunit C/D (601 aa).

The segment at 1 to 191 (MKLTREFPSN…DPFMLDAVKQ (191 aa)) is NADH dehydrogenase I subunit C. Residues 215–601 (DYMFLNLGPN…IDFVMSDVDR (387 aa)) are NADH dehydrogenase I subunit D.

In the N-terminal section; belongs to the complex I 30 kDa subunit family. The protein in the C-terminal section; belongs to the complex I 49 kDa subunit family. In terms of assembly, NDH-1 is composed of 13 different subunits. Subunits NuoB, CD, E, F, and G constitute the peripheral sector of the complex.

The protein localises to the cell inner membrane. It catalyses the reaction a quinone + NADH + 5 H(+)(in) = a quinol + NAD(+) + 4 H(+)(out). In terms of biological role, NDH-1 shuttles electrons from NADH, via FMN and iron-sulfur (Fe-S) centers, to quinones in the respiratory chain. The immediate electron acceptor for the enzyme in this species is believed to be ubiquinone. Couples the redox reaction to proton translocation (for every two electrons transferred, four hydrogen ions are translocated across the cytoplasmic membrane), and thus conserves the redox energy in a proton gradient. This is NADH-quinone oxidoreductase subunit C/D from Aeromonas hydrophila subsp. hydrophila (strain ATCC 7966 / DSM 30187 / BCRC 13018 / CCUG 14551 / JCM 1027 / KCTC 2358 / NCIMB 9240 / NCTC 8049).